The sequence spans 315 residues: tRNA dimethylallyltransferase (315 aa).

10-17 (GPTATGKS) contacts ATP. 12–17 (TATGKS) is a substrate binding site. The tract at residues 35–38 (DSMQ) is interaction with substrate tRNA.

This sequence belongs to the IPP transferase family. As to quaternary structure, monomer. The cofactor is Mg(2+).

It catalyses the reaction adenosine(37) in tRNA + dimethylallyl diphosphate = N(6)-dimethylallyladenosine(37) in tRNA + diphosphate. Catalyzes the transfer of a dimethylallyl group onto the adenine at position 37 in tRNAs that read codons beginning with uridine, leading to the formation of N6-(dimethylallyl)adenosine (i(6)A). This is tRNA dimethylallyltransferase from Caldanaerobacter subterraneus subsp. tengcongensis (strain DSM 15242 / JCM 11007 / NBRC 100824 / MB4) (Thermoanaerobacter tengcongensis).